Reading from the N-terminus, the 132-residue chain is Small ribosomal subunit protein uS11 (132 aa).

This sequence belongs to the universal ribosomal protein uS11 family. In terms of assembly, part of the 30S ribosomal subunit. Interacts with proteins S7 and S18. Binds to IF-3.

Located on the platform of the 30S subunit, it bridges several disparate RNA helices of the 16S rRNA. Forms part of the Shine-Dalgarno cleft in the 70S ribosome. In Alcanivorax borkumensis (strain ATCC 700651 / DSM 11573 / NCIMB 13689 / SK2), this protein is Small ribosomal subunit protein uS11.